The sequence spans 174 residues: Adenine phosphoribosyltransferase (174 aa).

This sequence belongs to the purine/pyrimidine phosphoribosyltransferase family. As to quaternary structure, homodimer.

It localises to the cytoplasm. It catalyses the reaction AMP + diphosphate = 5-phospho-alpha-D-ribose 1-diphosphate + adenine. It functions in the pathway purine metabolism; AMP biosynthesis via salvage pathway; AMP from adenine: step 1/1. In terms of biological role, catalyzes a salvage reaction resulting in the formation of AMP, that is energically less costly than de novo synthesis. The sequence is that of Adenine phosphoribosyltransferase from Agathobacter rectalis (strain ATCC 33656 / DSM 3377 / JCM 17463 / KCTC 5835 / VPI 0990) (Eubacterium rectale).